The following is a 495-amino-acid chain: MKGYLSLSILPLLVAASPVVVDSIHNGAAPILSSMNAKEVPDSYIVVFKKHVNAESAAAHHSWVQDIHSAQNERVELRKRSLFGFGEEAYLGLKNTFDIAGSLVGYSGHFHEDVIEQVRKHPDVEYIEKDSEVHTMEDPTVEKSAPWGLARISHRDSLSFGTFNKYLYASEGGEGVDAYTIDTGINVDHVDFEGRAQWGKTIPTDDEDADGNGHGTHCSGTIAGRKYGVAKKANLYAVKVLRSSGSGTMSDVVAGVEWAVKSHLKKVKDAKDGKIKGFKGSVANMSLGGGKSRTLEAAVNAGVEAGLHFAVAAGNDNADACNYSPAAAENPITVGASTLQDERAYFSNYGKCTDIFAPGLNILSTWIGSKHAVNTISGTSMASPHIAGLLAYFVSLQPSKDSAFAVDELTPKKLKKDIIAIATQGALTDIPSDTPNLLAWNGGGSSNYTDIIASGGYKVNASVKDRFEGLVHKAEKLLTEELGAIYSEIHDAAVA.

The signal sequence occupies residues 1–16; it reads MKGYLSLSILPLLVAA. A propeptide spanning residues 17-136 is cleaved from the precursor; it reads SPVVVDSIHN…IEKDSEVHTM (120 aa). An Inhibitor I9 domain is found at 43-136; sequence SYIVVFKKHV…IEKDSEVHTM (94 aa). A Peptidase S8 domain is found at 146–452; the sequence is PWGLARISHR…GGSSNYTDII (307 aa). Catalysis depends on charge relay system residues aspartate 182 and histidine 214. N-linked (GlcNAc...) asparagine glycosylation occurs at asparagine 284. Serine 380 functions as the Charge relay system in the catalytic mechanism. 2 N-linked (GlcNAc...) asparagine glycosylation sites follow: asparagine 447 and asparagine 460.

Belongs to the peptidase S8 family.

The catalysed reaction is Hydrolysis of proteins with broad specificity, and of Bz-Arg-OEt &gt; Ac-Tyr-OEt. Does not hydrolyze peptide amides.. Alkaline protease that allows assimilation of proteinaceous substrates. Acts as a significant virulence factor in invasive aspergillosis. Required for regular sporulation. This Aspergillus fumigatus (strain CBS 144.89 / FGSC A1163 / CEA10) (Neosartorya fumigata) protein is Alkaline protease 2 (alp2).